The chain runs to 1406 residues: Ubiquitin carboxyl-terminal hydrolase 6 (1406 aa).

The region spanning 100–292 (GIPMNIRGPV…RLWDVYLVEG (193 aa)) is the Rab-GAP TBC domain. A disordered region spans residues 348–380 (KLTRKQGDLPPPAKREQGSLAPRPVPASRGGKT). A USP domain is found at 532 to 1369 (TGLSNLGNTC…SAYILFYEQQ (838 aa)). The active-site Nucleophile is C541. Residues 1120 to 1231 (HKPLTPQGDE…KKNLDASKEN (112 aa)) form a disordered region. The span at 1129–1155 (ELSKPRILAREVKKVDAQSSAGKEDML) shows a compositional bias: basic and acidic residues. Low complexity predominate over residues 1156–1197 (LSKSPSSLSANISSSPKGSPSSSRKSGTSCPSSKNSSPNSSP). The active-site Proton acceptor is the H1328. The tract at residues 1384 to 1406 (KMADTSSTDEDSESDYEKYSMLQ) is disordered.

The protein belongs to the peptidase C19 family. Interacts with RAC1 and CDC42. Interacts (via Rab-GAP TBC domain) with ARF6. Interacts with calmodulin (CALM1, CALM2 and/or CALM3); the interaction is calcium-dependent. Post-translationally, monubiquitinated; ubiquitination is calmodulin and calcium dependent. As to expression, testis specific. Expressed in various cancer cell lines.

Its subcellular location is the cell membrane. It localises to the cytoplasm. The protein resides in the endosome. The enzyme catalyses Thiol-dependent hydrolysis of ester, thioester, amide, peptide and isopeptide bonds formed by the C-terminal Gly of ubiquitin (a 76-residue protein attached to proteins as an intracellular targeting signal).. Deubiquitinase with an ATP-independent isopeptidase activity, cleaving at the C-terminus of the ubiquitin moiety. Catalyzes its own deubiquitination. In vitro, isoform 2, but not isoform 3, shows deubiquitinating activity. Promotes plasma membrane localization of ARF6 and selectively regulates ARF6-dependent endocytic protein trafficking. Is able to initiate tumorigenesis by inducing the production of matrix metalloproteinases following NF-kappa-B activation. May act as a GTPase-activating protein for RAB3A. This chain is Ubiquitin carboxyl-terminal hydrolase 6 (USP6), found in Homo sapiens (Human).